Reading from the N-terminus, the 316-residue chain is Olfactory receptor 10A7 (316 aa).

Residues 1-25 (MICENHTRVTEFILLGFTNNPEMQV) are Extracellular-facing. N-linked (GlcNAc...) asparagine glycosylation is present at Asn5. Residues 26 to 46 (SLFIFFLAIYTVTLLGNFLIV) traverse the membrane as a helical segment. Over 47–54 (TVTSVDLA) the chain is Cytoplasmic. A helical membrane pass occupies residues 55 to 75 (LQTPMYFFLQNLSLLEVCFTL). The Extracellular segment spans residues 76–99 (VMVPKMLVDLVSPRKIISFVGCGT). Residues 100–120 (QMYFFFFFGSSECFLLSMMAY) traverse the membrane as a helical segment. Residues 121–139 (DRFVAICNPLHYSVIMNRS) are Cytoplasmic-facing. Residues 140–160 (LCLWMAIGSWMSGVPVSMLQT) form a helical membrane-spanning segment. Residues 161–197 (AWMMALPFCGPNAVDHFFCDGPPVLKLVTVDTTMYEM) lie on the Extracellular side of the membrane. A helical transmembrane segment spans residues 198 to 217 (QALASTLLFIMFPFCLILVS). At 218–237 (YTRIIITILRMSSATGRQKA) the chain is on the cytoplasmic side. A helical transmembrane segment spans residues 238–258 (FSTCSSHLIVVSLFYGTASLT). The Extracellular portion of the chain corresponds to 259–271 (YLRPKSNQSPESK). A helical transmembrane segment spans residues 272 to 292 (KLVSLSYTVITPMLNPIIYGL). Topologically, residues 293-316 (RNNEVKGAVKRTITQKVLQKLDVF) are cytoplasmic.

This sequence belongs to the G-protein coupled receptor 1 family.

Its subcellular location is the cell membrane. Its function is as follows. Odorant receptor. In Homo sapiens (Human), this protein is Olfactory receptor 10A7 (OR10A7).